We begin with the raw amino-acid sequence, 128 residues long: Large ribosomal subunit protein uL22 (128 aa).

Belongs to the universal ribosomal protein uL22 family. In terms of assembly, part of the 50S ribosomal subunit.

In terms of biological role, this protein binds specifically to 23S rRNA; its binding is stimulated by other ribosomal proteins, e.g. L4, L17, and L20. It is important during the early stages of 50S assembly. It makes multiple contacts with different domains of the 23S rRNA in the assembled 50S subunit and ribosome. The globular domain of the protein is located near the polypeptide exit tunnel on the outside of the subunit, while an extended beta-hairpin is found that lines the wall of the exit tunnel in the center of the 70S ribosome. The protein is Large ribosomal subunit protein uL22 of Rhodopseudomonas palustris (strain BisB18).